A 267-amino-acid chain; its full sequence is tRNA pseudouridine synthase A (267 aa).

Residue Asp-51 is the Nucleophile of the active site. Position 109 (Tyr-109) interacts with substrate.

It belongs to the tRNA pseudouridine synthase TruA family. In terms of assembly, homodimer.

The catalysed reaction is uridine(38/39/40) in tRNA = pseudouridine(38/39/40) in tRNA. Formation of pseudouridine at positions 38, 39 and 40 in the anticodon stem and loop of transfer RNAs. This is tRNA pseudouridine synthase A from Staphylococcus aureus (strain bovine RF122 / ET3-1).